A 424-amino-acid chain; its full sequence is Serine hydroxymethyltransferase (424 aa).

(6S)-5,6,7,8-tetrahydrofolate contacts are provided by residues Leu-126 and 130 to 132 (GHL). Position 235 is an N6-(pyridoxal phosphate)lysine (Lys-235). 359-361 (SPF) contributes to the (6S)-5,6,7,8-tetrahydrofolate binding site.

This sequence belongs to the SHMT family. As to quaternary structure, homodimer. Pyridoxal 5'-phosphate serves as cofactor.

It localises to the cytoplasm. It carries out the reaction (6R)-5,10-methylene-5,6,7,8-tetrahydrofolate + glycine + H2O = (6S)-5,6,7,8-tetrahydrofolate + L-serine. Its pathway is one-carbon metabolism; tetrahydrofolate interconversion. The protein operates within amino-acid biosynthesis; glycine biosynthesis; glycine from L-serine: step 1/1. Its function is as follows. Catalyzes the reversible interconversion of serine and glycine with tetrahydrofolate (THF) serving as the one-carbon carrier. This reaction serves as the major source of one-carbon groups required for the biosynthesis of purines, thymidylate, methionine, and other important biomolecules. Also exhibits THF-independent aldolase activity toward beta-hydroxyamino acids, producing glycine and aldehydes, via a retro-aldol mechanism. This Prochlorococcus marinus (strain MIT 9303) protein is Serine hydroxymethyltransferase.